Here is a 1204-residue protein sequence, read N- to C-terminus: ATP-dependent helicase/nuclease subunit A (1204 aa).

The UvrD-like helicase ATP-binding domain maps to 2-469 (TKFTKEQNQA…IVLSDNFRST (468 aa)). 23–30 (ASAGSGKT) lines the ATP pocket. The UvrD-like helicase C-terminal domain maps to 496–784 (EGQLQFGATY…KLMTIHASKG (289 aa)).

The protein belongs to the helicase family. AddA subfamily. In terms of assembly, heterodimer of AddA and AddB/RexB. Mg(2+) is required as a cofactor.

The catalysed reaction is Couples ATP hydrolysis with the unwinding of duplex DNA by translocating in the 3'-5' direction.. It carries out the reaction ATP + H2O = ADP + phosphate + H(+). Its function is as follows. The heterodimer acts as both an ATP-dependent DNA helicase and an ATP-dependent, dual-direction single-stranded exonuclease. Recognizes the chi site generating a DNA molecule suitable for the initiation of homologous recombination. The AddA nuclease domain is required for chi fragment generation; this subunit has the helicase and 3' -&gt; 5' nuclease activities. The sequence is that of ATP-dependent helicase/nuclease subunit A from Lactobacillus johnsonii (strain CNCM I-12250 / La1 / NCC 533).